Here is a 256-residue protein sequence, read N- to C-terminus: Hydroxyacylglutathione hydrolase (256 aa).

Positions 57, 59, 61, 62, 115, 134, and 172 each coordinate Zn(2+).

Belongs to the metallo-beta-lactamase superfamily. Glyoxalase II family. As to quaternary structure, monomer. It depends on Zn(2+) as a cofactor.

The enzyme catalyses an S-(2-hydroxyacyl)glutathione + H2O = a 2-hydroxy carboxylate + glutathione + H(+). It participates in secondary metabolite metabolism; methylglyoxal degradation; (R)-lactate from methylglyoxal: step 2/2. In terms of biological role, thiolesterase that catalyzes the hydrolysis of S-D-lactoyl-glutathione to form glutathione and D-lactic acid. This chain is Hydroxyacylglutathione hydrolase, found in Rhizobium etli (strain ATCC 51251 / DSM 11541 / JCM 21823 / NBRC 15573 / CFN 42).